A 157-amino-acid chain; its full sequence is ATP synthase subunit b (157 aa).

A helical membrane pass occupies residues Leu-7–Leu-29.

The protein belongs to the ATPase B chain family. In terms of assembly, F-type ATPases have 2 components, F(1) - the catalytic core - and F(0) - the membrane proton channel. F(1) has five subunits: alpha(3), beta(3), gamma(1), delta(1), epsilon(1). F(0) has three main subunits: a(1), b(2) and c(10-14). The alpha and beta chains form an alternating ring which encloses part of the gamma chain. F(1) is attached to F(0) by a central stalk formed by the gamma and epsilon chains, while a peripheral stalk is formed by the delta and b chains.

Its subcellular location is the cell inner membrane. Functionally, f(1)F(0) ATP synthase produces ATP from ADP in the presence of a proton or sodium gradient. F-type ATPases consist of two structural domains, F(1) containing the extramembraneous catalytic core and F(0) containing the membrane proton channel, linked together by a central stalk and a peripheral stalk. During catalysis, ATP synthesis in the catalytic domain of F(1) is coupled via a rotary mechanism of the central stalk subunits to proton translocation. Component of the F(0) channel, it forms part of the peripheral stalk, linking F(1) to F(0). The sequence is that of ATP synthase subunit b from Nitrosomonas europaea (strain ATCC 19718 / CIP 103999 / KCTC 2705 / NBRC 14298).